The chain runs to 216 residues: Eukaryotic translation initiation factor isoform 4E-2 (216 aa).

The tract at residues 1–23 (MAEVEAPATAVEAPAAAVATTTP) is disordered. The cysteines at positions 113 and 152 are disulfide-linked.

The protein belongs to the eukaryotic initiation factor 4E family. EIF4F is a multi-subunit complex, the composition of which varies with external and internal environmental conditions. It is composed of at least EIF4A, EIF4E and EIF4G. EIF4E is also known to interact with other partners. In higher plants two isoforms of EIF4F have been identified, named isoform EIF4F and isoform EIF(iso)4F. Isoform EIF4F has subunits p220 and p26, whereas isoform EIF(iso)4F has subunits p82 and p28. In terms of processing, according to the redox status, the Cys-113-Cys-152 disulfide bridge may have a role in regulating protein function by affecting its ability to bind capped mRNA.

Its function is as follows. Recognizes and binds the 7-methylguanosine-containing mRNA cap during an early step in the initiation of protein synthesis and facilitates ribosome binding by inducing the unwinding of the mRNAs secondary structures. This chain is Eukaryotic translation initiation factor isoform 4E-2, found in Zea mays (Maize).